A 105-amino-acid polypeptide reads, in one-letter code: Small ribosomal subunit protein uS10c (105 aa).

Belongs to the universal ribosomal protein uS10 family. Part of the 30S ribosomal subunit.

The protein localises to the plastid. It localises to the cyanelle. Involved in the binding of tRNA to the ribosomes. The protein is Small ribosomal subunit protein uS10c (rps10) of Cyanophora paradoxa.